Here is a 67-residue protein sequence, read N- to C-terminus: Protein AaeX (67 aa).

2 helical membrane passes run 3-23 (VLPVFVMFGLSFPPVFIELII) and 43-63 (LVWHPALFNTALYCCVFYLVS).

The protein belongs to the AaeX family.

The protein resides in the cell membrane. This is Protein AaeX from Pantoea vagans (strain C9-1) (Pantoea agglomerans (strain C9-1)).